A 177-amino-acid polypeptide reads, in one-letter code: Probable phospholipid hydroperoxide glutathione peroxidase (177 aa).

Residue cysteine 42 is part of the active site.

Belongs to the glutathione peroxidase family.

It localises to the cytoplasm. It carries out the reaction a hydroperoxy polyunsaturated fatty acid + 2 glutathione = a hydroxy polyunsaturated fatty acid + glutathione disulfide + H2O. In terms of biological role, protects cells and enzymes from oxidative damage, by catalyzing the reduction of hydrogen peroxide, lipid peroxides and organic hydroperoxide, by glutathione. This chain is Probable phospholipid hydroperoxide glutathione peroxidase, found in Encephalitozoon cuniculi (strain GB-M1) (Microsporidian parasite).